A 397-amino-acid polypeptide reads, in one-letter code: Acetate kinase (397 aa).

Residue Asn-9 coordinates Mg(2+). Lys-16 serves as a coordination point for ATP. Residue Arg-87 participates in substrate binding. The active-site Proton donor/acceptor is Asp-144. Residues 204-208 (HLGNG), 279-281 (DCR), and 327-331 (GIGEN) contribute to the ATP site. Glu-381 is a Mg(2+) binding site.

The protein belongs to the acetokinase family. As to quaternary structure, homodimer. Mg(2+) is required as a cofactor. Requires Mn(2+) as cofactor.

It localises to the cytoplasm. It carries out the reaction acetate + ATP = acetyl phosphate + ADP. It functions in the pathway metabolic intermediate biosynthesis; acetyl-CoA biosynthesis; acetyl-CoA from acetate: step 1/2. Functionally, catalyzes the formation of acetyl phosphate from acetate and ATP. Can also catalyze the reverse reaction. This is Acetate kinase from Chromobacterium violaceum (strain ATCC 12472 / DSM 30191 / JCM 1249 / CCUG 213 / NBRC 12614 / NCIMB 9131 / NCTC 9757 / MK).